A 134-amino-acid polypeptide reads, in one-letter code: MDFVMKQALGGATKDMGKMLGGEEEKDPDAQKKEEERQEALRQQEEERKAKHARMEAEREKVRQQIRDKYGLKKKEEKEAEEKAALEQPCEGSLTRPKKAIPAGCGDEEEEEEESILDTVLKYLPGPLQDMFKK.

A disordered region spans residues 1 to 114; that stretch reads MDFVMKQALG…CGDEEEEEEE (114 aa). Residues 15-85 are compositionally biased toward basic and acidic residues; that stretch reads DMGKMLGGEE…EEKEAEEKAA (71 aa). Positions 28–84 form a coiled coil; sequence PDAQKKEEERQEALRQQEEERKAKHARMEAEREKVRQQIRDKYGLKKKEEKEAEEKA. Positions 41–97 are interaction with the SNARE complex; sequence LRQQEEERKAKHARMEAEREKVRQQIRDKYGLKKKEEKEAEEKAALEQPCEGSLTRP. Residue Ser-93 is modified to Phosphoserine.

Belongs to the complexin/synaphin family. As to quaternary structure, binds to the SNARE core complex containing SNAP25, VAMP2 and STX1A. In terms of tissue distribution, nervous system. Also present in adrenal chromaffin cells (at protein level).

The protein resides in the cytoplasm. It is found in the cytosol. It localises to the presynapse. The protein localises to the nucleus. Its subcellular location is the perikaryon. Negatively regulates the formation of synaptic vesicle clustering at active zone to the presynaptic membrane in postmitotic neurons. Positively regulates a late step in exocytosis of various cytoplasmic vesicles, such as synaptic vesicles and other secretory vesicles. Also involved in mast cell exocytosis. This chain is Complexin-2 (CPLX2), found in Bos taurus (Bovine).